The chain runs to 538 residues: Mitochondrial distribution and morphology protein 34 (538 aa).

One can recognise an SMP-LTD domain in the interval 1–224; the sequence is MSFRFDRSVF…LPTALFNMSQ (224 aa). 2 disordered regions span residues 26–55 and 231–251; these read ALNPKSRRHVERADEAGNEDDSSGHQRKSG and DGSRSSAKHKKDTCDENNQPS.

The protein belongs to the MDM34 family. In terms of assembly, component of the ER-mitochondria encounter structure (ERMES) or MDM complex, composed of MMM1, MDM10, MDM12 and MDM34.

The protein resides in the mitochondrion outer membrane. Component of the ERMES/MDM complex, which serves as a molecular tether to connect the endoplasmic reticulum (ER) and mitochondria. Components of this complex are involved in the control of mitochondrial shape and protein biogenesis, and function in nonvesicular lipid trafficking between the ER and mitochondria. MDM34 is required for the interaction of the ER-resident membrane protein MMM1 and the outer mitochondrial membrane-resident beta-barrel protein MDM10. This is Mitochondrial distribution and morphology protein 34 from Candida glabrata (strain ATCC 2001 / BCRC 20586 / JCM 3761 / NBRC 0622 / NRRL Y-65 / CBS 138) (Yeast).